Here is a 225-residue protein sequence, read N- to C-terminus: Urease accessory protein UreG (225 aa).

Residues 1–21 (MHLDHHHESAAAVSADARRPD) form a disordered region. 33–40 (GPVGSGKT) is a GTP binding site.

Belongs to the SIMIBI class G3E GTPase family. UreG subfamily. In terms of assembly, homodimer. UreD, UreF and UreG form a complex that acts as a GTP-hydrolysis-dependent molecular chaperone, activating the urease apoprotein by helping to assemble the nickel containing metallocenter of UreC. The UreE protein probably delivers the nickel.

It localises to the cytoplasm. Functionally, facilitates the functional incorporation of the urease nickel metallocenter. This process requires GTP hydrolysis, probably effectuated by UreG. The polypeptide is Urease accessory protein UreG (Streptomyces coelicolor (strain ATCC BAA-471 / A3(2) / M145)).